We begin with the raw amino-acid sequence, 679 residues long: Protein hook (679 aa).

The Calponin-homology (CH) domain occupies 6–123 (NEMYYSLLEW…RLLQLVLGCA (118 aa)). Coiled-coil stretches lie at residues 135–437 (EIMC…LKCG) and 480–574 (QTAL…QEIL).

Belongs to the hook family. In terms of assembly, homodimer. Interacts with microtubules via its N-terminus.

The protein resides in the cytoplasm. Its subcellular location is the cytoskeleton. The protein localises to the endosome. It is found in the synapse. Involved in endocytic trafficking by stabilizing organelles of the endocytic pathway. Probably acts as a cytoskeletal linker protein required to tether endosome vesicles to the cytoskeleton. Involved in modulation of endocytosis at stages required for down-regulation of membrane proteins that control synapse size. Not involved in synaptic vesicle recycling. Required in R7 cells for boss endocytosis into multivesicular bodies (MVBs). Has a role in regulating adult longevity. This Drosophila simulans (Fruit fly) protein is Protein hook.